The following is a 481-amino-acid chain: Aspartyl/glutamyl-tRNA(Asn/Gln) amidotransferase subunit B (481 aa).

The protein belongs to the GatB/GatE family. GatB subfamily. As to quaternary structure, heterotrimer of A, B and C subunits.

The catalysed reaction is L-glutamyl-tRNA(Gln) + L-glutamine + ATP + H2O = L-glutaminyl-tRNA(Gln) + L-glutamate + ADP + phosphate + H(+). The enzyme catalyses L-aspartyl-tRNA(Asn) + L-glutamine + ATP + H2O = L-asparaginyl-tRNA(Asn) + L-glutamate + ADP + phosphate + 2 H(+). In terms of biological role, allows the formation of correctly charged Asn-tRNA(Asn) or Gln-tRNA(Gln) through the transamidation of misacylated Asp-tRNA(Asn) or Glu-tRNA(Gln) in organisms which lack either or both of asparaginyl-tRNA or glutaminyl-tRNA synthetases. The reaction takes place in the presence of glutamine and ATP through an activated phospho-Asp-tRNA(Asn) or phospho-Glu-tRNA(Gln). The sequence is that of Aspartyl/glutamyl-tRNA(Asn/Gln) amidotransferase subunit B from Pseudomonas fluorescens (strain Pf0-1).